Here is a 418-residue protein sequence, read N- to C-terminus: Serine hydroxymethyltransferase (418 aa).

Residues Leu121 and 125 to 127 (GHL) contribute to the (6S)-5,6,7,8-tetrahydrofolate site. Position 230 is an N6-(pyridoxal phosphate)lysine (Lys230). 356-358 (SPF) is a binding site for (6S)-5,6,7,8-tetrahydrofolate.

Belongs to the SHMT family. As to quaternary structure, homodimer. Requires pyridoxal 5'-phosphate as cofactor.

It localises to the cytoplasm. It catalyses the reaction (6R)-5,10-methylene-5,6,7,8-tetrahydrofolate + glycine + H2O = (6S)-5,6,7,8-tetrahydrofolate + L-serine. Its pathway is one-carbon metabolism; tetrahydrofolate interconversion. The protein operates within amino-acid biosynthesis; glycine biosynthesis; glycine from L-serine: step 1/1. Catalyzes the reversible interconversion of serine and glycine with tetrahydrofolate (THF) serving as the one-carbon carrier. This reaction serves as the major source of one-carbon groups required for the biosynthesis of purines, thymidylate, methionine, and other important biomolecules. Also exhibits THF-independent aldolase activity toward beta-hydroxyamino acids, producing glycine and aldehydes, via a retro-aldol mechanism. This is Serine hydroxymethyltransferase from Alteromonas mediterranea (strain DSM 17117 / CIP 110805 / LMG 28347 / Deep ecotype).